Reading from the N-terminus, the 517-residue chain is Argininosuccinate lyase, chloroplastic (517 aa).

The N-terminal 45 residues, 1–45, are a transit peptide targeting the chloroplast; it reads MGAIDLSFSQSLLFSSSRSNLSSSTHRSVSFLPPGSKSRCLPPLR. Positions 79, 166, and 211 each coordinate 2-(N(omega)-L-arginino)succinate. H212 serves as the catalytic Proton acceptor. S333 acts as the Proton donor in catalysis. N341, Y373, Q378, and K381 together coordinate 2-(N(omega)-L-arginino)succinate.

The protein belongs to the lyase 1 family. Argininosuccinate lyase subfamily.

It is found in the plastid. It localises to the chloroplast. It carries out the reaction 2-(N(omega)-L-arginino)succinate = fumarate + L-arginine. It functions in the pathway amino-acid biosynthesis; L-arginine biosynthesis; L-arginine from L-ornithine and carbamoyl phosphate: step 3/3. In Arabidopsis thaliana (Mouse-ear cress), this protein is Argininosuccinate lyase, chloroplastic.